The following is a 540-amino-acid chain: Alanine aminotransferase 2 (540 aa).

An N6-(pyridoxal phosphate)lysine modification is found at lysine 358.

This sequence belongs to the class-I pyridoxal-phosphate-dependent aminotransferase family. Alanine aminotransferase subfamily. Homodimer. It depends on pyridoxal 5'-phosphate as a cofactor.

It carries out the reaction L-alanine + 2-oxoglutarate = pyruvate + L-glutamate. The protein operates within amino-acid degradation; L-alanine degradation via transaminase pathway; pyruvate from L-alanine: step 1/1. Functionally, catalyzes the reversible transamination between alanine and 2-oxoglutarate to form pyruvate and glutamate. This is Alanine aminotransferase 2 (gpt2) from Xenopus laevis (African clawed frog).